The chain runs to 458 residues: (R)-6-hydroxynicotine oxidase (458 aa).

In terms of domain architecture, FAD-binding PCMH-type spans 33–204; it reads RHLQRPSLIA…TEVEVQLYEL (172 aa). FAD is bound by residues 67–73, 129–130, 134–137, glycine 144, threonine 195, asparagine 413, and asparagine 450; these read RSGGHNP, HP, and FCGL. Residue histidine 71 is modified to Pros-8alpha-FAD histidine.

This sequence belongs to the oxygen-dependent FAD-linked oxidoreductase family. As to quaternary structure, monomer. FAD is required as a cofactor.

It localises to the cytoplasm. It carries out the reaction (R)-6-hydroxynicotine + O2 + H2O = 6-hydroxypseudooxynicotine + H2O2. The enzyme catalyses (R)-6-hydroxynicotine + O2 = 6-hydroxy-N-methylmyosmine + H2O2. Its pathway is alkaloid degradation; nicotine degradation; 6-hydroxypseudooxynicotine from nicotine (R-isomer route): step 2/2. With respect to regulation, inhibited by (S)-6-hydroxynicotine. Inhibited by high concentrations of phenanthroline. Involved in the degradation of D-nicotine. Catalyzes the oxidation of (R)-6-hydroxynicotine (6-hydroxy-D-nicotine) to 6-hydroxypseudooxynicotine. Oxidation of the pyrrolidine ring of (R)-6-hydroxynicotine leads to the formation of the optically inactive 6-hydroxy-N-methylmyosmine, which hydrolyzes spontaneously to 6-hydroxypseudooxynicotine. Acts with absolute stereospecificity on the D-form of 6-hydroxynicotine. Shows lower activity with (R)-6-hydroxynornicotine, and weak activity with (R)-4-(1-methylpyrrolidine-2-yl)phenol, (R)-6-chloronicotine and (R)-nicotine. The sequence is that of (R)-6-hydroxynicotine oxidase from Paenarthrobacter nicotinovorans (Arthrobacter nicotinovorans).